The chain runs to 87 residues: Translation initiation factor IF-1 2 (87 aa).

Residues 1–72 (MAADDHIEME…TKGRIARRTT (72 aa)) form the S1-like domain. The segment at 65-87 (GRIARRTTTPSGGPRPARSGNRR) is disordered.

Belongs to the IF-1 family. Component of the 30S ribosomal translation pre-initiation complex which assembles on the 30S ribosome in the order IF-2 and IF-3, IF-1 and N-formylmethionyl-tRNA(fMet); mRNA recruitment can occur at any time during PIC assembly.

Its subcellular location is the cytoplasm. One of the essential components for the initiation of protein synthesis. Stabilizes the binding of IF-2 and IF-3 on the 30S subunit to which N-formylmethionyl-tRNA(fMet) subsequently binds. Helps modulate mRNA selection, yielding the 30S pre-initiation complex (PIC). Upon addition of the 50S ribosomal subunit IF-1, IF-2 and IF-3 are released leaving the mature 70S translation initiation complex. This chain is Translation initiation factor IF-1 2, found in Nitratidesulfovibrio vulgaris (strain ATCC 29579 / DSM 644 / CCUG 34227 / NCIMB 8303 / VKM B-1760 / Hildenborough) (Desulfovibrio vulgaris).